The sequence spans 468 residues: Secreted triacylglycerol lipase LIP7 (468 aa).

The signal sequence occupies residues 1–21; sequence MFPRQILVFAALGLCFALVAG. Cysteines 125 and 295 form a disulfide. The Nucleophile role is filled by Ser209. Catalysis depends on residues Asp355 and His389.

It belongs to the AB hydrolase superfamily. Lipase family. Class Lip subfamily.

Its subcellular location is the secreted. It is found in the cell wall. It carries out the reaction a triacylglycerol + H2O = a diacylglycerol + a fatty acid + H(+). The enzyme catalyses a monoacylglycerol + H2O = glycerol + a fatty acid + H(+). The catalysed reaction is a diacylglycerol + H2O = a monoacylglycerol + a fatty acid + H(+). In terms of biological role, secreted lipase involved in Dandruff and seborrheic dermatitis (D/SD) probably via lipase-mediated breakdown of sebaceous lipids and release of irritating free fatty acids. Has triacylglycerol lipase activity and is able to hydrolyze triolein. Mostly converts monoolein to di- and triolein, while free fatty acids are only produced in low amounts. This chain is Secreted triacylglycerol lipase LIP7, found in Malassezia globosa (strain ATCC MYA-4612 / CBS 7966) (Dandruff-associated fungus).